We begin with the raw amino-acid sequence, 432 residues long: Bifunctional protein GlmU (432 aa).

Residues 1–223 (MGKKSIIILA…EENFKGVNSK (223 aa)) are pyrophosphorylase. Residues 9-12 (LAAG), Lys23, Gln75, and 82-83 (GT) each bind UDP-N-acetyl-alpha-D-glucosamine. Asp103 contributes to the Mg(2+) binding site. 4 residues coordinate UDP-N-acetyl-alpha-D-glucosamine: Gly135, Glu149, Asn164, and Asn221. Asn221 serves as a coordination point for Mg(2+). A linker region spans residues 224 to 244 (VELADAEVIHQNRIKKEFMKA). The N-acetyltransferase stretch occupies residues 245 to 432 (GVIMRLPDTI…FYKHFSSKKK (188 aa)). Residues Arg308 and Lys325 each coordinate UDP-N-acetyl-alpha-D-glucosamine. The active-site Proton acceptor is His336. UDP-N-acetyl-alpha-D-glucosamine is bound by residues Tyr339 and Asn350. Acetyl-CoA is bound by residues 359-360 (NY), Ser378, Ala396, and Arg413.

It in the N-terminal section; belongs to the N-acetylglucosamine-1-phosphate uridyltransferase family. In the C-terminal section; belongs to the transferase hexapeptide repeat family. Homotrimer. Mg(2+) is required as a cofactor.

It localises to the cytoplasm. It catalyses the reaction alpha-D-glucosamine 1-phosphate + acetyl-CoA = N-acetyl-alpha-D-glucosamine 1-phosphate + CoA + H(+). The enzyme catalyses N-acetyl-alpha-D-glucosamine 1-phosphate + UTP + H(+) = UDP-N-acetyl-alpha-D-glucosamine + diphosphate. It functions in the pathway nucleotide-sugar biosynthesis; UDP-N-acetyl-alpha-D-glucosamine biosynthesis; N-acetyl-alpha-D-glucosamine 1-phosphate from alpha-D-glucosamine 6-phosphate (route II): step 2/2. The protein operates within nucleotide-sugar biosynthesis; UDP-N-acetyl-alpha-D-glucosamine biosynthesis; UDP-N-acetyl-alpha-D-glucosamine from N-acetyl-alpha-D-glucosamine 1-phosphate: step 1/1. Its pathway is bacterial outer membrane biogenesis; LPS lipid A biosynthesis. Catalyzes the last two sequential reactions in the de novo biosynthetic pathway for UDP-N-acetylglucosamine (UDP-GlcNAc). The C-terminal domain catalyzes the transfer of acetyl group from acetyl coenzyme A to glucosamine-1-phosphate (GlcN-1-P) to produce N-acetylglucosamine-1-phosphate (GlcNAc-1-P), which is converted into UDP-GlcNAc by the transfer of uridine 5-monophosphate (from uridine 5-triphosphate), a reaction catalyzed by the N-terminal domain. The protein is Bifunctional protein GlmU of Aliarcobacter butzleri (strain RM4018) (Arcobacter butzleri).